Consider the following 215-residue polypeptide: N-(5'-phosphoribosyl)anthranilate isomerase (215 aa).

It belongs to the TrpF family.

The catalysed reaction is N-(5-phospho-beta-D-ribosyl)anthranilate = 1-(2-carboxyphenylamino)-1-deoxy-D-ribulose 5-phosphate. It participates in amino-acid biosynthesis; L-tryptophan biosynthesis; L-tryptophan from chorismate: step 3/5. The sequence is that of N-(5'-phosphoribosyl)anthranilate isomerase from Chlorobium phaeobacteroides (strain DSM 266 / SMG 266 / 2430).